We begin with the raw amino-acid sequence, 193 residues long: Apoptosis-associated speck-like protein containing a CARD (193 aa).

One can recognise a Pyrin domain in the interval M1–E91. Glycyl lysine isopeptide (Lys-Gly) (interchain with G-Cter in ubiquitin) cross-links involve residues K55 and K172. The 89-residue stretch at S105–S193 folds into the CARD domain. At S193 the chain carries Phosphoserine.

As to quaternary structure, self-associates; enforced oligomerization induces apoptosis, NF-kappa-B regulation and interleukin-1 beta secretion. Homooligomers can form disk-like particles of approximately 12 nm diameter and approximately 1 nm height. Component of several inflammasomes containing one pattern recognition receptor/sensor, such as NLRP2, NLRP3, NLRP6, NLRC4, AIM2, MEFV or NOD2, and probably NLRC4 or NLRP12. Major component of the ASC pyroptosome, a 1-2 um supramolecular assembly (one per macrophage cell) which consists of oligomerized PYCARD dimers and CASP1. Interacts with CASP1 (precursor form); the interaction induces activation of CASP1 leading to the processing of interleukin-1 beta; PYCARD competes with RIPK2 for binding to CASP1. Interacts with NLRP3; the interaction requires the homooligomerization of NLRP3. Interacts with NLRP2, NLRC4, MEFV, CARD16, AIM2, NOD2, RIGI, RIPK2, PYDC1, PYDC2, NLRP10, CHUK, IKBKB and BAX. Interacts with CASP8. Component of the AIM2 PANoptosome complex, a multiprotein complex that drives inflammatory cell death (PANoptosis). In terms of processing, phosphorylated. Post-translationally, 'Lys-63'-linked polyubiquitination by TRAF3 is critical for speck formation and inflammasome activation. 'Lys-63'-linked deubiquitinated by USP50; a crucial step for NLRP3-mediated inflammasome activation. 'Lys-63'-linked polyubiquitination by PELI1 is also critical for speck formation and inflammasome activation. Deubiquitinated by USP3 that cleaves 'Lys-48'-linked ubiquitin chains and strengthens its stability by blocking proteasomal degradation. As to expression, expressed in small intestine, colon, thymus, spleen, brain, heart, skeletal muscle, kidney, lung and liver.

The protein resides in the cytoplasm. Its subcellular location is the inflammasome. The protein localises to the endoplasmic reticulum. It localises to the mitochondrion. It is found in the nucleus. Its function is as follows. Functions as a key mediator in apoptosis and inflammation. Promotes caspase-mediated apoptosis involving predominantly caspase-8 and also caspase-9 in a probable cell type-specific manner. Involved in activation of the mitochondrial apoptotic pathway, promotes caspase-8-dependent proteolytic maturation of BID independently of FADD in certain cell types and also mediates mitochondrial translocation of BAX and activates BAX-dependent apoptosis coupled to activation of caspase-9, -2 and -3. Involved in innate immune response by acting as an integral adapter in the assembly of various inflammasomes (NLRP2, NLRP3, NLRP6 and AIM2) which recruit and activate caspase-1 leading to processing and secretion of pro-inflammatory cytokines. Caspase-1-dependent inflammation leads to macrophage pyroptosis, a form of cell death. The function as activating adapter in different types of inflammasomes is mediated by the pyrin and CARD domains and their homotypic interactions. Clustered PYCARD nucleates the formation of caspase-1 filaments through the interaction of their respective CARD domains, acting as a platform for of caspase-1 polymerization. In the NLRC4 inflammasomes seems not be required but facilitates the processing of procaspase-1. In cooperation with NOD2 involved in an inflammasome activated by bacterial muramyl dipeptide leading to caspase-1 activation. May be involved in RIGI-triggered pro-inflammatory responses and inflammasome activation. In collaboration with AIM2 which detects cytosolic double-stranded DNA may also be involved in a caspase-1-independent cell death that involves caspase-8. In adaptive immunity may be involved in maturation of dendritic cells to stimulate T-cell immunity and in cytoskeletal rearrangements coupled to chemotaxis and antigen uptake may be involved in post-transcriptional regulation of the guanine nucleotide exchange factor DOCK2; the latter function is proposed to involve the nuclear form. Also involved in transcriptional activation of cytokines and chemokines independent of the inflammasome; this function may involve AP-1, NF-kappa-B, MAPK and caspase-8 signaling pathways. For regulation of NF-kappa-B activating and inhibiting functions have been reported. Modulates NF-kappa-B induction at the level of the IKK complex by inhibiting kinase activity of CHUK and IKBK. Proposed to compete with RIPK2 for association with CASP1 thereby down-regulating CASP1-mediated RIPK2-dependent NF-kappa-B activation and activating interleukin-1 beta processing. Modulates host resistance to DNA virus infection, probably by inducing the cleavage of and inactivating CGAS in presence of cytoplasmic double-stranded DNA. This Mus musculus (Mouse) protein is Apoptosis-associated speck-like protein containing a CARD (Pycard).